Consider the following 670-residue polypeptide: MILEERPDGAGAGEESPRLQGCDSLTQIQCGQLQSRRAQIHQQIDKELQMRTGAENLYRATSNNRVRETVALELSYVNSNLQLLKEELEELSGGVDPGRHGSEAVTVPMIPLGLKETKELDWSTPLKELISVHFGEDGASYEAEIRELEALRQAMRTPSRNESGLELLTAYYNQLCFLDARFLTPARSLGLFFHWYDSLTGVPAQQRALAFEKGSVLFNIGALHTQIGARQDRSCTEGARRAMEAFQRAAGAFSLLRENFSHAPSPDMSAASLCALEQLMMAQAQECVFEGLSPPASMAPQDCLAQLRLAQEAAQVAAEYRLVHRTMAQPPVHDYVPVSWTALVHVKAEYFRSLAHYHVAMALCDGSPATEGELPTHEQVFLQPPTSSKPRGPVLPQELEERRQLGKAHLKRAILGQEEALRLHALCRVLREVDLLRAVISQTLQRSLAKYAELDREDDFCEAAEAPDIQPKTHQKPEARMPRLSQGKGPDIFHRLGPLSVFSAKNRWRLVGPVHLTRGEGGFGLTLRGDSPVLIAAVIPGSQAAAAGLKEGDYIVSVNGQPCRWWRHAEVVTELKAAGEAGASLQVVSLLPSSRLPSLGDRRPVLLGPRGLLRSQREHGCKTPASTWASPRPLLNWSRKAQQGKTGGCPQPCAPVKPAPPSSLKHPGWP.

The disordered stretch occupies residues 1–20; that stretch reads MILEERPDGAGAGEESPRLQ. The region spanning 23–97 is the REM-1 domain; sequence DSLTQIQCGQ…LEELSGGVDP (75 aa). Ser24 carries the phosphoserine modification. The region spanning 108 to 457 is the BRO1 domain; it reads PMIPLGLKET…LAKYAELDRE (350 aa). The PDZ domain occupies 513–592; it reads PVHLTRGEGG…ASLQVVSLLP (80 aa). The interval 616 to 670 is disordered; sequence QREHGCKTPASTWASPRPLLNWSRKAQQGKTGGCPQPCAPVKPAPPSSLKHPGWP. Over residues 652-661 the composition is skewed to pro residues; that stretch reads PCAPVKPAPP.

It belongs to the RHPN family. Binds specifically to GTP-Rho. Interacts with ROPN1.

Its function is as follows. Has no enzymatic activity. May serve as a target for Rho, and interact with some cytoskeletal component upon Rho binding or relay a Rho signal to other molecules. The chain is Rhophilin-1 from Homo sapiens (Human).